Reading from the N-terminus, the 389-residue chain is MVTVEDVWRAQRARGPATVLAIGTATPPNCVDQSTYPDYYFRITNSEHKVELKEKFKRMCDKSMIKKRYMYLTEEILKENPLVCEYMAPSLDARQDMVVVEVPKLGKEAATKAIKEWGQPKSKITHLVFCTTSGVDMPGADYQLTKLLGLRPSVKRLMMYQQGCFAGGTVLRLAKDLAENNKGARVLVVCSEITAVTFRGPSDTHLDSLVGQSLFGDGAAAIIIGSDPIPEVEKPLFELVSAAQTILPSSDGAIDGHLREVGLTFHLLKDVPRLISMNVEKSLVEAFQPLGISDWNSLFWIAHPGGPAILDQVELKLGLKEEKLRATRHVLSEYGNMSSACVLFILDEMRKKSAEEGLKTTGEGLEWGVLFGFGPGLTVETVVLHSLCT.

Cys164 is an active-site residue.

It belongs to the thiolase-like superfamily. Chalcone/stilbene synthases family.

The enzyme catalyses (E)-4-coumaroyl-CoA + 3 malonyl-CoA + 3 H(+) = 2',4,4',6'-tetrahydroxychalcone + 3 CO2 + 4 CoA. The protein operates within secondary metabolite biosynthesis; flavonoid biosynthesis. Its function is as follows. The primary product of this enzyme is 4,2',4',6'-tetrahydroxychalcone (also termed naringenin-chalcone or chalcone) which can under specific conditions spontaneously isomerize into naringenin. This Camellia sinensis (Tea plant) protein is Chalcone synthase 3 (CHS3).